A 140-amino-acid chain; its full sequence is Cytochrome c-type biogenesis protein CcmE (140 aa).

Residues 1 to 7 (MKRKHKR) are Cytoplasmic-facing. Residues 8-28 (LLFVLASFCAAGCALLFILSE) traverse the membrane as a helical; Signal-anchor for type II membrane protein segment. The Periplasmic segment spans residues 29–140 (LRESVSFFYT…TIPKALPEPK (112 aa)). Heme contacts are provided by His121 and Tyr125.

This sequence belongs to the CcmE/CycJ family.

It localises to the cell inner membrane. Its function is as follows. Heme chaperone required for the biogenesis of c-type cytochromes. Transiently binds heme delivered by CcmC and transfers the heme to apo-cytochromes in a process facilitated by CcmF and CcmH. In Anaplasma marginale (strain Florida), this protein is Cytochrome c-type biogenesis protein CcmE.